The primary structure comprises 400 residues: Acetylornithine aminotransferase (400 aa).

Pyridoxal 5'-phosphate-binding positions include Gly-113–Ala-114 and Phe-139. A N(2)-acetyl-L-ornithine-binding site is contributed by Arg-142. Residue Asp-224–Gln-227 coordinates pyridoxal 5'-phosphate. Lys-253 carries the post-translational modification N6-(pyridoxal phosphate)lysine. Ser-281 lines the N(2)-acetyl-L-ornithine pocket. Thr-282 lines the pyridoxal 5'-phosphate pocket.

It belongs to the class-III pyridoxal-phosphate-dependent aminotransferase family. ArgD subfamily. In terms of assembly, homodimer. Requires pyridoxal 5'-phosphate as cofactor.

The protein localises to the cytoplasm. The enzyme catalyses N(2)-acetyl-L-ornithine + 2-oxoglutarate = N-acetyl-L-glutamate 5-semialdehyde + L-glutamate. It participates in amino-acid biosynthesis; L-arginine biosynthesis; N(2)-acetyl-L-ornithine from L-glutamate: step 4/4. The protein is Acetylornithine aminotransferase of Mycobacterium bovis (strain ATCC BAA-935 / AF2122/97).